Consider the following 195-residue polypeptide: Imidazoleglycerol-phosphate dehydratase (195 aa).

The protein belongs to the imidazoleglycerol-phosphate dehydratase family.

The protein resides in the cytoplasm. The enzyme catalyses D-erythro-1-(imidazol-4-yl)glycerol 3-phosphate = 3-(imidazol-4-yl)-2-oxopropyl phosphate + H2O. It participates in amino-acid biosynthesis; L-histidine biosynthesis; L-histidine from 5-phospho-alpha-D-ribose 1-diphosphate: step 6/9. This is Imidazoleglycerol-phosphate dehydratase from Paraburkholderia xenovorans (strain LB400).